Reading from the N-terminus, the 140-residue chain is Putative peptidyl-tRNA hydrolase PTRHD1 (140 aa).

Belongs to the PTH2 family. PTRHD1 subfamily.

It carries out the reaction an N-acyl-L-alpha-aminoacyl-tRNA + H2O = an N-acyl-L-amino acid + a tRNA + H(+). Functionally, as a putative peptidyl-tRNA hydrolase, it might be involved in releasing tRNAs from the ribosome during protein synthesis. Some evidence, however, suggests that it lacks peptidyl-tRNA hydrolase activity. The chain is Putative peptidyl-tRNA hydrolase PTRHD1 (PTRHD1) from Homo sapiens (Human).